The chain runs to 373 residues: MKIISEGETKLMVPEESTLSKKDTVFYNPVMETNRNISVSVVQSFLDNFKRDEFLMCDPLGGSGARGIRYANELEFNGDLKVSIGDINPSAVKMIKENLKLNELENVEVFHEDANVLLSKNFKVFNVVDLDPFGSPVPYLDSGIRASLTKGGLLCMTATDTAVLCGAYRKTCIRKYNAIPLKGDKELAVRLMIGYAVKMASKYDIGLKPIFSHVTDHYARTFMVTERGAGKADSAIENLGYIRQDSEQKSFKAFEEGYEKGYAGSFYLGEISDKDIVQNSLETAKNRNYSKRAVDILELISKESEIEQVGCFDIHELCSFIKKLVPPVNDIMDNLKENGFKVSRVHYNPYGLKTDAELSDLVVLISEYHSKKY.

Residues Lys2–Ile365 form the Trm1 methyltransferase domain. Residues Arg35, Arg66, Asp86, Asp113, and Ala114 each contribute to the S-adenosyl-L-methionine site.

The protein belongs to the class I-like SAM-binding methyltransferase superfamily. Trm1 family.

It catalyses the reaction guanosine(26) in tRNA + 2 S-adenosyl-L-methionine = N(2)-dimethylguanosine(26) in tRNA + 2 S-adenosyl-L-homocysteine + 2 H(+). In terms of biological role, dimethylates a single guanine residue at position 26 of a number of tRNAs using S-adenosyl-L-methionine as donor of the methyl groups. In Methanococcus maripaludis (strain C5 / ATCC BAA-1333), this protein is tRNA (guanine(26)-N(2))-dimethyltransferase.